A 470-amino-acid chain; its full sequence is Poly(A) polymerase catalytic subunit (470 aa).

Residues aspartate 192 and aspartate 194 contribute to the active site.

It belongs to the poxviridae poly(A) polymerase catalytic subunit family. Heterodimer of a large (catalytic) subunit and a small (regulatory) subunit.

The enzyme catalyses RNA(n) + ATP = RNA(n)-3'-adenine ribonucleotide + diphosphate. Its function is as follows. Polymerase that creates the 3'-poly(A) tail of mRNA's. This Oryctolagus cuniculus (Rabbit) protein is Poly(A) polymerase catalytic subunit (PAPL).